Reading from the N-terminus, the 59-residue chain is Large ribosomal subunit protein bL32 (59 aa).

The disordered stretch occupies residues 1-21; the sequence is MAVPKKKSSKSKGRSRAAHHA.

It belongs to the bacterial ribosomal protein bL32 family.

The protein is Large ribosomal subunit protein bL32 of Magnetococcus marinus (strain ATCC BAA-1437 / JCM 17883 / MC-1).